A 429-amino-acid chain; its full sequence is Argininosuccinate lyase (429 aa).

This sequence belongs to the lyase 1 family. Argininosuccinate lyase subfamily.

Its subcellular location is the cytoplasm. It catalyses the reaction 2-(N(omega)-L-arginino)succinate = fumarate + L-arginine. It participates in amino-acid biosynthesis; L-arginine biosynthesis; L-arginine from L-ornithine and carbamoyl phosphate: step 3/3. The sequence is that of Argininosuccinate lyase from Pyrobaculum arsenaticum (strain DSM 13514 / JCM 11321 / PZ6).